The primary structure comprises 274 residues: Thiamine kinase (274 aa).

Belongs to the thiamine kinase family.

The enzyme catalyses thiamine + ATP = thiamine phosphate + ADP + H(+). It participates in cofactor biosynthesis; thiamine diphosphate biosynthesis; thiamine phosphate from thiamine: step 1/1. Catalyzes the ATP-dependent phosphorylation of thiamine to thiamine phosphate. Is involved in thiamine salvage. This Escherichia coli O9:H4 (strain HS) protein is Thiamine kinase.